Reading from the N-terminus, the 76-residue chain is DNA-directed RNA polymerase subunit epsilon (76 aa).

This sequence belongs to the RNA polymerase subunit epsilon family. In terms of assembly, RNAP is composed of a core of 2 alpha, a beta and a beta' subunit. The core is associated with a delta subunit, and at least one of epsilon or omega. When a sigma factor is associated with the core the holoenzyme is formed, which can initiate transcription.

The enzyme catalyses RNA(n) + a ribonucleoside 5'-triphosphate = RNA(n+1) + diphosphate. A non-essential component of RNA polymerase (RNAP). In Streptococcus equi subsp. equi (strain 4047), this protein is DNA-directed RNA polymerase subunit epsilon.